A 72-amino-acid polypeptide reads, in one-letter code: Large ribosomal subunit protein bL31 (72 aa).

Positions 16, 18, 38, and 41 each coordinate Zn(2+).

The protein belongs to the bacterial ribosomal protein bL31 family. Type A subfamily. Part of the 50S ribosomal subunit. Requires Zn(2+) as cofactor.

Functionally, binds the 23S rRNA. This chain is Large ribosomal subunit protein bL31, found in Vibrio cholerae serotype O1 (strain ATCC 39541 / Classical Ogawa 395 / O395).